Consider the following 1317-residue polypeptide: uncharacterized protein (1317 aa).

Belongs to the oxoprolinase family.

This is an uncharacterized protein from Schizosaccharomyces pombe (strain 972 / ATCC 24843) (Fission yeast).